Reading from the N-terminus, the 216-residue chain is 3-keto-L-gulonate-6-phosphate decarboxylase UlaD (216 aa).

Asp11 serves as a coordination point for substrate. Residues Glu33 and Asp62 each contribute to the Mg(2+) site. Residue Arg192 coordinates substrate.

The protein belongs to the HPS/KGPDC family. KGPDC subfamily. In terms of assembly, homodimer. The cofactor is Mg(2+).

It catalyses the reaction 3-dehydro-L-gulonate 6-phosphate + H(+) = L-xylulose 5-phosphate + CO2. It participates in cofactor degradation; L-ascorbate degradation; D-xylulose 5-phosphate from L-ascorbate: step 2/4. Functionally, catalyzes the decarboxylation of 3-keto-L-gulonate-6-P into L-xylulose-5-P. Is involved in the anaerobic L-ascorbate utilization. The protein is 3-keto-L-gulonate-6-phosphate decarboxylase UlaD of Shigella boydii serotype 18 (strain CDC 3083-94 / BS512).